A 493-amino-acid chain; its full sequence is Aerolysin (493 aa).

Positions 1–23 are cleaved as a signal peptide; the sequence is MQKIKLTGLSLIISGLLMAQAQA. 2 disulfides stabilise this stretch: cysteine 42–cysteine 98 and cysteine 182–cysteine 187. Residues 68–84 form an interaction with host N-linked glycan region; the sequence is WQISGLANGWVIMGPGY. The tract at residues 256–288 is part of the transmembrane beta-barrel after proteolytic activation of the toxin and insertion into the host membrane; it reads YGLSEKVTTKNKFKWPLVGETELSIEIAANQSW. Residues 346–355 are interaction with glycans from host GPI-anchor; the sequence is RWGGNAWYTH. A propeptide spanning residues 446–493 is cleaved from the precursor; the sequence is AADSKVRRARSVDGAGQGLRLEIPLDAQELSGLGFNNVSLSVTPAANQ.

This sequence belongs to the aerolysin family. As to quaternary structure, homodimer in solution; homoheptamer in the host membrane. After binding to GPI-anchored proteins in target membranes and proteolytic removal of the C-terminal propeptide, the protein assembles into a heptameric pre-pore complex. A further conformation change leads to insertion into the host membrane. Proteolytic cleavage and subsequent release of the propeptide trigger a major conformation change, leading to the formation of a heptameric pre-pore that then inserts into the host membrane.

The protein localises to the secreted. The protein resides in the host cell membrane. In terms of biological role, secreted, cytolytic toxin that forms pores in host membranes after proteolytic removal of a C-terminal propeptide, leading to destruction of the membrane permeability barrier and host cell death. The pores are formed by transmembrane beta-strands and are approximately 3 nm in diameter. The sequence is that of Aerolysin (aerA) from Aeromonas hydrophila.